We begin with the raw amino-acid sequence, 159 residues long: MAIQFVINLLVSVIWLLVTNSYTLNNFVLGFILGLFLVYLLHRVLPGQFYLVRIYRIIMLIITFLTELIKANFGVLKIILKPRIENKPGFFVYETELERDWQLVLLSNLITLTPGTVVLGISDDRKKIYIHSIDFSTKEEEIQNIKSSLEKVVRKVGEK.

4 consecutive transmembrane segments (helical) span residues 1–21, 27–47, 60–80, and 101–121; these read MAIQ…VTNS, FVLG…VLPG, LIIT…KIIL, and WQLV…VLGI.

The protein belongs to the CPA3 antiporters (TC 2.A.63) subunit E family. May form a heterooligomeric complex that consists of seven subunits: mnhA1, mnhB1, mnhC1, mnhD1, mnhE1, mnhF1 and mnhG1.

It localises to the cell membrane. Mnh complex is a Na(+)/H(+) antiporter involved in Na(+) excretion. The chain is Na(+)/H(+) antiporter subunit E1 (mnhE1) from Staphylococcus epidermidis (strain ATCC 35984 / DSM 28319 / BCRC 17069 / CCUG 31568 / BM 3577 / RP62A).